We begin with the raw amino-acid sequence, 290 residues long: Phosphatidylglycerol--prolipoprotein diacylglyceryl transferase (290 aa).

Helical transmembrane passes span 21–41 (VSLH…MWLA), 60–80 (LLYA…VLFY), 96–116 (WDGG…MFWF), 130–150 (FIAP…FING), 198–218 (SQLY…NLFI), 225–245 (GAVS…VEAF), and 258–278 (VISM…IMMI). Position 143 (R143) interacts with a 1,2-diacyl-sn-glycero-3-phospho-(1'-sn-glycerol).

This sequence belongs to the Lgt family.

The protein localises to the cell inner membrane. It catalyses the reaction L-cysteinyl-[prolipoprotein] + a 1,2-diacyl-sn-glycero-3-phospho-(1'-sn-glycerol) = an S-1,2-diacyl-sn-glyceryl-L-cysteinyl-[prolipoprotein] + sn-glycerol 1-phosphate + H(+). The protein operates within protein modification; lipoprotein biosynthesis (diacylglyceryl transfer). Its function is as follows. Catalyzes the transfer of the diacylglyceryl group from phosphatidylglycerol to the sulfhydryl group of the N-terminal cysteine of a prolipoprotein, the first step in the formation of mature lipoproteins. The polypeptide is Phosphatidylglycerol--prolipoprotein diacylglyceryl transferase (Serratia proteamaculans (strain 568)).